The following is a 132-amino-acid chain: Small ribosomal subunit protein uS8 (132 aa).

This sequence belongs to the universal ribosomal protein uS8 family. As to quaternary structure, part of the 30S ribosomal subunit. Contacts proteins S5 and S12.

One of the primary rRNA binding proteins, it binds directly to 16S rRNA central domain where it helps coordinate assembly of the platform of the 30S subunit. This Acetivibrio thermocellus (strain ATCC 27405 / DSM 1237 / JCM 9322 / NBRC 103400 / NCIMB 10682 / NRRL B-4536 / VPI 7372) (Clostridium thermocellum) protein is Small ribosomal subunit protein uS8.